The primary structure comprises 170 residues: MDLKQYVTVVPDYPKEGVQFKDITTLMDKGEVYRYATDQIVEYAKERDIDLIVGPEARGFIIGCPVAYALGVGFAPVRKEGKLPREVVKVEYGLEYGKDVLTIHKDAIRPGQRVLITDDLLATGGTIEASIKLVEELGGVVAGIAFLIELTYLDGRKKLDGYDILTLMQY.

Belongs to the purine/pyrimidine phosphoribosyltransferase family. As to quaternary structure, homodimer.

It is found in the cytoplasm. It catalyses the reaction AMP + diphosphate = 5-phospho-alpha-D-ribose 1-diphosphate + adenine. It functions in the pathway purine metabolism; AMP biosynthesis via salvage pathway; AMP from adenine: step 1/1. Its function is as follows. Catalyzes a salvage reaction resulting in the formation of AMP, that is energically less costly than de novo synthesis. The sequence is that of Adenine phosphoribosyltransferase from Bacillus pumilus (strain SAFR-032).